The sequence spans 245 residues: NAD-dependent protein deacetylase (245 aa).

Residues 1–245 enclose the Deacetylase sirtuin-type domain; sequence MIFVQQFEEV…EFVEGLSSMK (245 aa). Residues Ala-26, Thr-30, Phe-37, Arg-38, Gln-105, Ile-107, Asp-108, and His-123 each coordinate NAD(+). Phe-37 contacts nicotinamide. Residues Ile-107 and Asp-108 each contribute to the nicotinamide site. His-123 serves as the catalytic Proton acceptor. Zn(2+) contacts are provided by Cys-131, Cys-134, Cys-151, and Cys-154. 4 residues coordinate NAD(+): Thr-190, Ser-191, Asn-216, and Ile-234.

The protein belongs to the sirtuin family. Class U subfamily. Zn(2+) is required as a cofactor.

Its subcellular location is the cytoplasm. The catalysed reaction is N(6)-acetyl-L-lysyl-[protein] + NAD(+) + H2O = 2''-O-acetyl-ADP-D-ribose + nicotinamide + L-lysyl-[protein]. NAD-dependent protein deacetylase which modulates the activities of several enzymes which are inactive in their acetylated form. The chain is NAD-dependent protein deacetylase from Bacillus cereus (strain ATCC 14579 / DSM 31 / CCUG 7414 / JCM 2152 / NBRC 15305 / NCIMB 9373 / NCTC 2599 / NRRL B-3711).